A 148-amino-acid chain; its full sequence is Large ribosomal subunit protein bL9 (148 aa).

It belongs to the bacterial ribosomal protein bL9 family.

Its function is as follows. Binds to the 23S rRNA. This chain is Large ribosomal subunit protein bL9, found in Sulfurimonas denitrificans (strain ATCC 33889 / DSM 1251) (Thiomicrospira denitrificans (strain ATCC 33889 / DSM 1251)).